Reading from the N-terminus, the 325-residue chain is MSAAIAATARPAAEMRTRALYDLPLPELMFRAQAVHRAHFDACSVETAQLLSIKTGGCPEDCGYCSQSAHHDTGVAATRLMDVEAVLAEARKAKAAGAARFCMGAAWRAPKDRDMDAVCAMISGVRALGLETCVTLGMLTPAQVDRLSAAGLDYYNHNVDTSPAYYPRITSTRTLDDRLETLGHVRAGGIKVCCGGIVGMGETIEDRLAMLELLAGLDPHPESVPLNMWTPIDGTPVKAFEEKVDPIAFVRLVAVARLLMPRSVVRLSAGRHTLSDEAQALCFLAGANSIFVGDTLLTTPNMEESRDAVLLARLGLRPAPAQPSA.

Residues 43–262 (CSVETAQLLS…VAVARLLMPR (220 aa)) enclose the Radical SAM core domain. [4Fe-4S] cluster is bound by residues Cys-58, Cys-62, and Cys-65. Cys-102, Cys-133, Cys-193, and Arg-266 together coordinate [2Fe-2S] cluster.

This sequence belongs to the radical SAM superfamily. Biotin synthase family. Homodimer. [4Fe-4S] cluster is required as a cofactor. It depends on [2Fe-2S] cluster as a cofactor.

It carries out the reaction (4R,5S)-dethiobiotin + (sulfur carrier)-SH + 2 reduced [2Fe-2S]-[ferredoxin] + 2 S-adenosyl-L-methionine = (sulfur carrier)-H + biotin + 2 5'-deoxyadenosine + 2 L-methionine + 2 oxidized [2Fe-2S]-[ferredoxin]. It functions in the pathway cofactor biosynthesis; biotin biosynthesis; biotin from 7,8-diaminononanoate: step 2/2. Catalyzes the conversion of dethiobiotin (DTB) to biotin by the insertion of a sulfur atom into dethiobiotin via a radical-based mechanism. The protein is Biotin synthase of Azorhizobium caulinodans (strain ATCC 43989 / DSM 5975 / JCM 20966 / LMG 6465 / NBRC 14845 / NCIMB 13405 / ORS 571).